We begin with the raw amino-acid sequence, 57 residues long: Small ribosomal subunit protein eS27 (57 aa).

Zn(2+) is bound by residues Cys-10, Cys-13, Cys-29, and Cys-32. A C4-type zinc finger spans residues 10–32 (CGDCENEQVVFGKASSVVSCAVC).

The protein belongs to the eukaryotic ribosomal protein eS27 family. In terms of assembly, part of the 30S ribosomal subunit. Zn(2+) serves as cofactor.

The sequence is that of Small ribosomal subunit protein eS27 from Halorubrum lacusprofundi (strain ATCC 49239 / DSM 5036 / JCM 8891 / ACAM 34).